Reading from the N-terminus, the 353-residue chain is 3-dehydroquinate synthase (353 aa).

NAD(+) contacts are provided by residues Ala60–Lys65, Gly94–Asp98, Thr118–Thr119, Lys131, and Lys140. Zn(2+)-binding residues include Glu173, His234, and His253.

It belongs to the sugar phosphate cyclases superfamily. Dehydroquinate synthase family. NAD(+) is required as a cofactor. It depends on Co(2+) as a cofactor. The cofactor is Zn(2+).

It localises to the cytoplasm. It catalyses the reaction 7-phospho-2-dehydro-3-deoxy-D-arabino-heptonate = 3-dehydroquinate + phosphate. It participates in metabolic intermediate biosynthesis; chorismate biosynthesis; chorismate from D-erythrose 4-phosphate and phosphoenolpyruvate: step 2/7. Its function is as follows. Catalyzes the conversion of 3-deoxy-D-arabino-heptulosonate 7-phosphate (DAHP) to dehydroquinate (DHQ). The chain is 3-dehydroquinate synthase from Parabacteroides distasonis (strain ATCC 8503 / DSM 20701 / CIP 104284 / JCM 5825 / NCTC 11152).